A 161-amino-acid chain; its full sequence is Peripheral myelin protein 22 (161 aa).

Residue Met1 is a topological domain, cytoplasmic. The helical transmembrane segment at 2 to 31 (LLLLLGILFLHIAVLVLLFVSTIVSQWLVG) threads the bilayer. Topologically, residues 32–64 (NGHTTDLWQNCTTSALGAVQHCYSSSVSEWLQS) are extracellular. Residue Asn41 is glycosylated (N-linked (GlcNAc...) asparagine). The chain crosses the membrane as a helical span at residues 65–91 (VQATMILSVIFSVLALFLFFCQLFTLT). Over 92–95 (KGGR) the chain is Cytoplasmic. A helical membrane pass occupies residues 96–119 (FYITGFFQILAGLCVMSAAAIYTV). At 120–133 (RHSEWHVNTDYSYG) the chain is on the extracellular side. A helical transmembrane segment spans residues 134 to 156 (FAYILAWVAFPLALLSGIIYVIL). Over 157–160 (RKRE) the chain is Cytoplasmic.

This sequence belongs to the PMP-22/EMP/MP20 family. Post-translationally, ubiquitinated by the DCX(DCAF13) E3 ubiquitin ligase complex, leading to its degradation. Schwann cells of the peripheral nervous system. Expressed at growth arrest of mammalian fibroblasts.

The protein localises to the cell membrane. Might be involved in growth regulation, and in myelinization in the peripheral nervous system. In Mus musculus (Mouse), this protein is Peripheral myelin protein 22 (Pmp22).